The sequence spans 374 residues: Alanine racemase (374 aa).

K44 acts as the Proton acceptor; specific for D-alanine in catalysis. The residue at position 44 (K44) is an N6-(pyridoxal phosphate)lysine. R139 lines the substrate pocket. Y269 functions as the Proton acceptor; specific for L-alanine in the catalytic mechanism. M317 contributes to the substrate binding site.

The protein belongs to the alanine racemase family. It depends on pyridoxal 5'-phosphate as a cofactor.

It catalyses the reaction L-alanine = D-alanine. It participates in amino-acid biosynthesis; D-alanine biosynthesis; D-alanine from L-alanine: step 1/1. Catalyzes the interconversion of L-alanine and D-alanine. May also act on other amino acids. The protein is Alanine racemase (alr) of Bordetella avium (strain 197N).